We begin with the raw amino-acid sequence, 297 residues long: ATP synthase gamma chain (297 aa).

Belongs to the ATPase gamma chain family. F-type ATPases have 2 components, CF(1) - the catalytic core - and CF(0) - the membrane proton channel. CF(1) has five subunits: alpha(3), beta(3), gamma(1), delta(1), epsilon(1). CF(0) has three main subunits: a, b and c.

The protein localises to the cell membrane. Functionally, produces ATP from ADP in the presence of a proton gradient across the membrane. The gamma chain is believed to be important in regulating ATPase activity and the flow of protons through the CF(0) complex. This is ATP synthase gamma chain from Renibacterium salmoninarum (strain ATCC 33209 / DSM 20767 / JCM 11484 / NBRC 15589 / NCIMB 2235).